The following is a 157-amino-acid chain: Small ribosomal subunit protein uS7 (157 aa).

This sequence belongs to the universal ribosomal protein uS7 family. As to quaternary structure, part of the 30S ribosomal subunit. Contacts proteins S9 and S11.

One of the primary rRNA binding proteins, it binds directly to 16S rRNA where it nucleates assembly of the head domain of the 30S subunit. Is located at the subunit interface close to the decoding center, probably blocks exit of the E-site tRNA. This Borreliella burgdorferi (strain ATCC 35210 / DSM 4680 / CIP 102532 / B31) (Borrelia burgdorferi) protein is Small ribosomal subunit protein uS7.